The primary structure comprises 249 residues: Adenosylcobinamide-GDP ribazoletransferase (249 aa).

6 consecutive transmembrane segments (helical) span residues 36–56 (LVGFLLGSIAAGVCYAMHSIG), 57–77 (LNLAADVLGLVTIITLTGGLH), 106–126 (VGAMGVIALATVLLLKIAFLF), 133–153 (KLTAFIMAPMAGRWAMVLAIT), 188–208 (LWLFGLPGLALLGIVFFITWL), and 226–246 (GALGEMIETWVIFLILLGQQI).

This sequence belongs to the CobS family. Mg(2+) serves as cofactor.

The protein resides in the cell membrane. It carries out the reaction alpha-ribazole + adenosylcob(III)inamide-GDP = adenosylcob(III)alamin + GMP + H(+). It catalyses the reaction alpha-ribazole 5'-phosphate + adenosylcob(III)inamide-GDP = adenosylcob(III)alamin 5'-phosphate + GMP + H(+). It functions in the pathway cofactor biosynthesis; adenosylcobalamin biosynthesis; adenosylcobalamin from cob(II)yrinate a,c-diamide: step 7/7. Joins adenosylcobinamide-GDP and alpha-ribazole to generate adenosylcobalamin (Ado-cobalamin). Also synthesizes adenosylcobalamin 5'-phosphate from adenosylcobinamide-GDP and alpha-ribazole 5'-phosphate. In Desulforamulus reducens (strain ATCC BAA-1160 / DSM 100696 / MI-1) (Desulfotomaculum reducens), this protein is Adenosylcobinamide-GDP ribazoletransferase.